Here is a 469-residue protein sequence, read N- to C-terminus: Uronate isomerase (469 aa).

It belongs to the metallo-dependent hydrolases superfamily. Uronate isomerase family.

It carries out the reaction D-glucuronate = D-fructuronate. The catalysed reaction is aldehydo-D-galacturonate = keto-D-tagaturonate. Its pathway is carbohydrate metabolism; pentose and glucuronate interconversion. This Rhizobium meliloti (strain 1021) (Ensifer meliloti) protein is Uronate isomerase.